The sequence spans 297 residues: ATP phosphoribosyltransferase (297 aa).

This sequence belongs to the ATP phosphoribosyltransferase family.

The protein resides in the cytoplasm. It catalyses the reaction 1-(5-phospho-beta-D-ribosyl)-ATP + diphosphate = 5-phospho-alpha-D-ribose 1-diphosphate + ATP. It participates in amino-acid biosynthesis; L-histidine biosynthesis; L-histidine from 5-phospho-alpha-D-ribose 1-diphosphate: step 1/9. Catalyzes the condensation of ATP and 5-phosphoribose 1-diphosphate to form N'-(5'-phosphoribosyl)-ATP (PR-ATP). Has a crucial role in the pathway because the rate of histidine biosynthesis seems to be controlled primarily by regulation of the enzymatic activity. This Kluyveromyces lactis (strain ATCC 8585 / CBS 2359 / DSM 70799 / NBRC 1267 / NRRL Y-1140 / WM37) (Yeast) protein is ATP phosphoribosyltransferase (HIS1).